Consider the following 183-residue polypeptide: Large ribosomal subunit protein uL5 (183 aa).

This sequence belongs to the universal ribosomal protein uL5 family. In terms of assembly, part of the 50S ribosomal subunit; part of the 5S rRNA/L5/L18/L25 subcomplex. Contacts the 5S rRNA and the P site tRNA. Forms a bridge to the 30S subunit in the 70S ribosome.

In terms of biological role, this is one of the proteins that bind and probably mediate the attachment of the 5S RNA into the large ribosomal subunit, where it forms part of the central protuberance. In the 70S ribosome it contacts protein S13 of the 30S subunit (bridge B1b), connecting the 2 subunits; this bridge is implicated in subunit movement. Contacts the P site tRNA; the 5S rRNA and some of its associated proteins might help stabilize positioning of ribosome-bound tRNAs. The chain is Large ribosomal subunit protein uL5 from Christiangramia forsetii (strain DSM 17595 / CGMCC 1.15422 / KT0803) (Gramella forsetii).